The chain runs to 810 residues: DNA-binding protein REB1 (810 aa).

Composition is skewed to basic and acidic residues over residues 1-10 (MPSGHNDKNA) and 29-44 (HQNH…LENK). 5 disordered regions span residues 1–80 (MPSG…ENIS), 114–161 (NQQD…GVDD), 180–243 (NNNN…TNND), 294–313 (HGLN…LSNS), and 346–365 (QDTQ…AGSV). Composition is skewed to low complexity over residues 51 to 64 (IVES…NNND) and 124 to 135 (NNNTDNGNDSNN). Over residues 149-161 (DKNKKDAGVGVDD) the composition is skewed to basic and acidic residues. Residues 180 to 191 (NNNNNNSIANDS) are compositionally biased toward low complexity. Residues 198-208 (HDNGNNHENSQ) are compositionally biased toward basic and acidic residues. Residues 346 to 355 (QDTQPHQQKS) are compositionally biased toward polar residues. The residue at position 355 (S355) is a Phosphoserine. The HTH myb-type domain occupies 470–523 (HIFEQRGKWTAEEEQELAKLCAEKEGQWAEIGKTLGRMPEDCRDRWRNYVKCGT). Positions 497–519 (WAEIGKTLGRMPEDCRDRWRNYV) form a DNA-binding region, H-T-H motif. A disordered region spans residues 572–667 (QNDHRNNDED…STHSKSLSNT (96 aa)). Low complexity predominate over residues 586-606 (ASAAAAAAAAIQEQQQLLQQK). The segment covering 627-636 (DNKDEDKPHD) has biased composition (basic and acidic residues). Residues 643–667 (DDNSQNSMVPAPSATSTHSKSLSNT) are compositionally biased toward polar residues. One can recognise a Myb-like domain in the interval 692–717 (NWTIVSERMGGTRSRIQCRYKWNKLV). K807 participates in a covalent cross-link: Glycyl lysine isopeptide (Lys-Gly) (interchain with G-Cter in SUMO).

The protein localises to the nucleus. Functionally, DNA-binding protein that recognizes sites within both the enhancer and the promoter of rRNA transcription, as well as upstream of many genes transcribed by RNA polymerase II. It is essential for cell growth. May stimulate or inhibit transcription. Specifically recognizes the sequence 5'-CCGGGTA-3' or 5'-CGGGTRR-3' (where R is any purine). A member of the general regulatory factors (GRFs) which act as genome partitioners. Acts as a chromatin insulator which are known as STARs (Subtelomeric anti-silencing region). STARs prevent negative or positive transcription influence by extending across chromatin to a promoter. This Saccharomyces cerevisiae (strain ATCC 204508 / S288c) (Baker's yeast) protein is DNA-binding protein REB1 (REB1).